We begin with the raw amino-acid sequence, 108 residues long: Anti-sigma-B factor antagonist (108 aa).

The STAS domain occupies 3 to 108 (LNIETTTQDK…MHVNEGTEVE (106 aa)). Position 57 is a phosphoserine (Ser57).

Belongs to the anti-sigma-factor antagonist family. Phosphorylated by RsbW on a serine residue.

Functionally, positive regulator of sigma-B activity. Non-phosphorylated RsbV binds to RsbW, preventing its association with sigma-B. When phosphorylated, releases RsbW, which is then free to complex with and inactivate sigma-B. The sequence is that of Anti-sigma-B factor antagonist (rsbV) from Staphylococcus aureus (strain NCTC 8325 / PS 47).